The sequence spans 592 residues: Frizzled-9 (592 aa).

A signal peptide spans 1–23 (MAVPPLLRGALLLWQLLATGGAA). The Extracellular portion of the chain corresponds to 24–230 (LEIGRFDPER…EVFWSRRDKD (207 aa)). The FZ domain maps to 35-156 (RGPAPCQAME…NDPHALCMEA (122 aa)). 5 disulfides stabilise this stretch: cysteine 40/cysteine 101, cysteine 48/cysteine 94, cysteine 85/cysteine 123, cysteine 112/cysteine 153, and cysteine 116/cysteine 140. An N-linked (GlcNAc...) asparagine glycan is attached at asparagine 54. The interval 59-173 (PNLLGHTSQG…PTEPHKGLGM (115 aa)) is required for Wnt-activated receptor activity. N-linked (GlcNAc...) asparagine glycosylation occurs at asparagine 159. A helical membrane pass occupies residues 231 to 251 (FALVWMAVWSALCFFSTAFTV). Topologically, residues 252-267 (FTFLLEPHRFQYPERP) are cytoplasmic. Residues 268–288 (IIFLSMCYNVYSLAFLIRAVA) traverse the membrane as a helical segment. Residues 289-316 (GAQSVACDQEAGALYVIQEGLENTGCTL) are Extracellular-facing. Residues 317 to 337 (VFLLLYYFGMASSLWWVVLTL) traverse the membrane as a helical segment. Topologically, residues 338 to 356 (TWFLAAGKKWGHEAIEAHG) are cytoplasmic. A helical transmembrane segment spans residues 357-377 (SYFHMAAWGLPALKTIVVLTL). At 378-401 (RKVAGDELTGLCYVASMDPAALTG) the chain is on the extracellular side. Residues 402 to 422 (FVLVPLSCYLVLGTSFLLTGF) traverse the membrane as a helical segment. Topologically, residues 423 to 448 (VALFHIRKIMKTGGTNTEKLEKLMVK) are cytoplasmic. Residues 449 to 469 (IGVFSILYTVPATCVIVCYVY) form a helical membrane-spanning segment. Over 470–509 (ERLNMDFWRLRATEQPCTAATVPGGRRDCSLPGGSVPTVA) the chain is Extracellular. A helical transmembrane segment spans residues 510–530 (VFMLKIFMSLVVGITSGVWVW). At 531–592 (SSKTFQTWQS…DPSLENPTHL (62 aa)) the chain is on the cytoplasmic side. Residues 533–538 (KTFQTW) carry the Lys-Thr-X-X-X-Trp motif, mediates interaction with the PDZ domain of Dvl family members motif. The segment at 555-592 (ACRTPGGYGRGTHCHYKAPTVVLHMTKTDPSLENPTHL) is required for CTNNB1 accumulation and TCF transcription factor activity.

It belongs to the G-protein coupled receptor Fz/Smo family. Ubiquitinated by ZNRF3, leading to its degradation by the proteasome. As to expression, in the embryo, found in the neural tube, trunk skeletal muscle precursors (myotomes), limb skeletal anlagen, craniofacial regions and nephric ducts. In the adult, expression is abundant in heart, brain, testis and skeletal muscle. In the testis, expressed in all spermatogenic cell types. Lower levels in adult lung, liver and kidney. Barely detectable in spleen. Expressed also in chondrocytes.

It is found in the cell membrane. Receptor for WNT2 that is coupled to the beta-catenin canonical signaling pathway, which leads to the activation of disheveled proteins, inhibition of GSK-3 kinase, nuclear accumulation of beta-catenin and activation of Wnt target genes. Plays a role in neuromuscular junction (NMJ) assembly by negatively regulating the clustering of acetylcholine receptors (AChR) through the beta-catenin canonical signaling pathway. May play a role in neural progenitor cells (NPCs) viability through the beta-catenin canonical signaling pathway by negatively regulating cell cycle arrest leading to inhibition of neuron apoptotic process. During hippocampal development, regulates neuroblast proliferation and apoptotic cell death. Controls bone formation through non canonical Wnt signaling mediated via ISG15. Positively regulates bone regeneration through non canonical Wnt signaling. This is Frizzled-9 (Fzd9) from Mus musculus (Mouse).